The primary structure comprises 230 residues: NADH dehydrogenase [ubiquinone] iron-sulfur protein 8, mitochondrial (230 aa).

Residues 1–42 (MAAILARKSLSALRSRQLVLAGQAWQQGANTSNGTLLGTRTF) constitute a mitochondrion transit peptide. 4Fe-4S ferredoxin-type domains follow at residues 122-151 (RRYP…IEAE) and 161-190 (TRYD…EGPN). Residues C131, C134, C137, C141, C170, C173, C176, and C180 each coordinate [4Fe-4S] cluster.

The protein belongs to the complex I 23 kDa subunit family. As to quaternary structure, complex I is composed of about 45 different subunits. This is a component of the iron-sulfur (IP) fragment of the enzyme. It depends on [4Fe-4S] cluster as a cofactor.

It localises to the mitochondrion. The catalysed reaction is a ubiquinone + NADH + 5 H(+)(in) = a ubiquinol + NAD(+) + 4 H(+)(out). Functionally, core subunit of the mitochondrial membrane respiratory chain NADH dehydrogenase (Complex I) that is believed to belong to the minimal assembly required for catalysis. Complex I functions in the transfer of electrons from NADH to the respiratory chain. The immediate electron acceptor for the enzyme is believed to be ubiquinone. May donate electrons to ubiquinone. The protein is NADH dehydrogenase [ubiquinone] iron-sulfur protein 8, mitochondrial of Nicotiana tabacum (Common tobacco).